Reading from the N-terminus, the 399-residue chain is 3-phosphoshikimate 1-carboxyvinyltransferase (399 aa).

3-phosphoshikimate is bound by residues K19, S20, and R24. K19 is a binding site for phosphoenolpyruvate. Phosphoenolpyruvate contacts are provided by G83 and R111. 3-phosphoshikimate is bound by residues S152, S153, Q154, D288, Q310, and K314. Residue Q154 participates in phosphoenolpyruvate binding. D288 functions as the Proton acceptor in the catalytic mechanism. Phosphoenolpyruvate contacts are provided by R318, R359, and K385.

Belongs to the EPSP synthase family. In terms of assembly, monomer.

It localises to the cytoplasm. It carries out the reaction 3-phosphoshikimate + phosphoenolpyruvate = 5-O-(1-carboxyvinyl)-3-phosphoshikimate + phosphate. It functions in the pathway metabolic intermediate biosynthesis; chorismate biosynthesis. Catalyzes the transfer of the enolpyruvyl moiety of phosphoenolpyruvate (PEP) to the 5-hydroxyl of shikimate-3-phosphate (S3P) to produce enolpyruvyl shikimate-3-phosphate and inorganic phosphate. In Thermococcus kodakarensis (strain ATCC BAA-918 / JCM 12380 / KOD1) (Pyrococcus kodakaraensis (strain KOD1)), this protein is 3-phosphoshikimate 1-carboxyvinyltransferase.